The primary structure comprises 118 residues: MLFFAVLGLLFFLIFFLVLVFHAFLWNLDLGIFSGERSWVSSFECGFLSQRVTENYFSYTYFILLVFFVVFDLEVSLLLNMPLQGVLYKNFFSYLFFLVLLGIGFLVEVRRGYVRWAY.

A run of 3 helical transmembrane segments spans residues methionine 1 to phenylalanine 21, tyrosine 59 to leucine 79, and valine 86 to leucine 106.

This sequence belongs to the complex I subunit 3 family.

It localises to the mitochondrion membrane. It catalyses the reaction a ubiquinone + NADH + 5 H(+)(in) = a ubiquinol + NAD(+) + 4 H(+)(out). In terms of biological role, core subunit of the mitochondrial membrane respiratory chain NADH dehydrogenase (Complex I) that is believed to belong to the minimal assembly required for catalysis. Complex I functions in the transfer of electrons from NADH to the respiratory chain. The immediate electron acceptor for the enzyme is believed to be ubiquinone. In Fasciola hepatica (Liver fluke), this protein is NADH-ubiquinone oxidoreductase chain 3 (ND3).